Consider the following 154-residue polypeptide: uncharacterized protein (154 aa).

The protein resides in the mitochondrion. This is an uncharacterized protein from Vicia faba (Broad bean).